Consider the following 326-residue polypeptide: 5-dehydro-2-deoxygluconokinase (326 aa).

Belongs to the carbohydrate kinase PfkB family.

It carries out the reaction 5-dehydro-2-deoxy-D-gluconate + ATP = 6-phospho-5-dehydro-2-deoxy-D-gluconate + ADP + H(+). It participates in polyol metabolism; myo-inositol degradation into acetyl-CoA; acetyl-CoA from myo-inositol: step 5/7. Catalyzes the phosphorylation of 5-dehydro-2-deoxy-D-gluconate (2-deoxy-5-keto-D-gluconate or DKG) to 6-phospho-5-dehydro-2-deoxy-D-gluconate (DKGP). This chain is 5-dehydro-2-deoxygluconokinase, found in Shouchella clausii (strain KSM-K16) (Alkalihalobacillus clausii).